The chain runs to 393 residues: Formate-dependent phosphoribosylglycinamide formyltransferase (393 aa).

Residues 22–23 (EL) and Glu-82 contribute to the N(1)-(5-phospho-beta-D-ribosyl)glycinamide site. ATP is bound by residues Arg-114, Lys-155, 160–165 (SSGKGQ), 195–198 (EGFI), and Glu-203. One can recognise an ATP-grasp domain in the interval 119 to 308 (RLAAEELGLP…EFALHARAIL (190 aa)). The Mg(2+) site is built by Glu-267 and Glu-279. N(1)-(5-phospho-beta-D-ribosyl)glycinamide-binding positions include Asp-286, Lys-356, and 363–364 (RR).

This sequence belongs to the PurK/PurT family. In terms of assembly, homodimer.

The enzyme catalyses N(1)-(5-phospho-beta-D-ribosyl)glycinamide + formate + ATP = N(2)-formyl-N(1)-(5-phospho-beta-D-ribosyl)glycinamide + ADP + phosphate + H(+). Its pathway is purine metabolism; IMP biosynthesis via de novo pathway; N(2)-formyl-N(1)-(5-phospho-D-ribosyl)glycinamide from N(1)-(5-phospho-D-ribosyl)glycinamide (formate route): step 1/1. In terms of biological role, involved in the de novo purine biosynthesis. Catalyzes the transfer of formate to 5-phospho-ribosyl-glycinamide (GAR), producing 5-phospho-ribosyl-N-formylglycinamide (FGAR). Formate is provided by PurU via hydrolysis of 10-formyl-tetrahydrofolate. The protein is Formate-dependent phosphoribosylglycinamide formyltransferase of Azotobacter vinelandii (strain DJ / ATCC BAA-1303).